The primary structure comprises 90 residues: Putative Fis-like DNA-binding protein (90 aa).

The segment at residues 66 to 85 is a DNA-binding region (H-T-H motif); it reads QSRAAALLGIHRATLRKKLK.

The protein belongs to the transcriptional regulatory Fis family.

This Xylella fastidiosa (strain 9a5c) protein is Putative Fis-like DNA-binding protein.